A 165-amino-acid polypeptide reads, in one-letter code: E3 ubiquitin ligase complex SCF subunit sconC (165 aa).

An interaction with the F-box domain of F-box proteins region spans residues I106–R165.

Belongs to the SKP1 family. As to quaternary structure, component of the SCF (SKP1-CUL1-F-box protein) E3 ubiquitin ligase complexes.

Its pathway is protein modification; protein ubiquitination. Functionally, essential component of the SCF (SKP1-CUL1-F-box protein) E3 ubiquitin ligase complexes, which mediate the ubiquitination and subsequent proteasomal degradation of target proteins. Controls sulfur metabolite repression, probably by mediating the inactivation or degradation of the metR transcription factor. This Arthroderma otae (Microsporum canis) protein is E3 ubiquitin ligase complex SCF subunit sconC (sconC).